Reading from the N-terminus, the 918-residue chain is Signal transduction histidine-protein kinase BarA (918 aa).

Over 1-10 the chain is Cytoplasmic; the sequence is MTNYSLRARM. The chain crosses the membrane as a helical span at residues 11-31; it reads MILILAPTVLIGLLLSIFFVV. The Periplasmic segment spans residues 32–175; the sequence is HRYNDLQRQL…LKSVRLQQYK (144 aa). The helical transmembrane segment at 176–196 threads the bilayer; the sequence is EIFISCVMMLFCIGIALIFGW. The Cytoplasmic segment spans residues 197–918; the sequence is RLMRDVTGPI…VAREASKILG (722 aa). The 53-residue stretch at 200–252 folds into the HAMP domain; that stretch reads RDVTGPIRNMVNTVDRIRRGQLDSRVEGFMLGELDMLKNGINSMAMSLAAYHE. The region spanning 299-520 is the Histidine kinase domain; it reads NMSHELRTPL…TFWFHINLDL (222 aa). The residue at position 302 (His-302) is a Phosphohistidine; by autocatalysis. Residues 669-785 enclose the Response regulatory domain; that stretch reads TVMAVDDNPA…RLHNLLLRYK (117 aa). 4-aspartylphosphate is present on Asp-718. One can recognise an HPt domain in the interval 822 to 918; it reads KTDLARDMLQ…VAREASKILG (97 aa). At His-861 the chain carries Phosphohistidine.

Post-translationally, activation requires a sequential transfer of a phosphate group from a His in the primary transmitter domain, to an Asp in the receiver domain and to a His in the secondary transmitter domain.

Its subcellular location is the cell inner membrane. It catalyses the reaction ATP + protein L-histidine = ADP + protein N-phospho-L-histidine.. Functionally, member of the two-component regulatory system UvrY/BarA involved in the regulation of carbon metabolism via the CsrA/CsrB regulatory system. Phosphorylates UvrY, probably via a four-step phosphorelay. In Shigella flexneri, this protein is Signal transduction histidine-protein kinase BarA (barA).